Here is a 586-residue protein sequence, read N- to C-terminus: Probable lysosomal cobalamin transporter (586 aa).

The next 9 membrane-spanning stretches (helical) occupy residues Ile10–Phe30, Val47–Val67, Ile96–Ala116, Ser147–Gly167, Ala191–Thr211, Leu315–Thr335, Ile378–Val398, Ile420–Met440, and Val509–Leu529. Asn540 carries N-linked (GlcNAc...) asparagine glycosylation.

This sequence belongs to the LIMR family. LMBRD1 subfamily.

It is found in the lysosome membrane. Functionally, probable lysosomal cobalamin transporter. Required to export cobalamin from lysosomes allowing its conversion to cofactors. The protein is Probable lysosomal cobalamin transporter of Pyricularia oryzae (strain 70-15 / ATCC MYA-4617 / FGSC 8958) (Rice blast fungus).